Reading from the N-terminus, the 681-residue chain is Long-chain-fatty-acid--CoA ligase heimdall (681 aa).

Residues 223 to 231, 414 to 419, aspartate 491, arginine 506, and lysine 639 contribute to the ATP site; these read TSGTVGMPK and ECYGMS.

This sequence belongs to the ATP-dependent AMP-binding enzyme family. Bubblegum subfamily.

It catalyses the reaction a long-chain fatty acid + ATP + CoA = a long-chain fatty acyl-CoA + AMP + diphosphate. In terms of biological role, mediates activation of long-chain fatty acids for both synthesis of cellular lipids, and degradation via beta-oxidation. Probably by regulating lipid storage and catabolism, plays a role in neuronal function. This Drosophila melanogaster (Fruit fly) protein is Long-chain-fatty-acid--CoA ligase heimdall.